The primary structure comprises 123 residues: Ribonuclease P protein component (123 aa).

It belongs to the RnpA family. Consists of a catalytic RNA component (M1 or rnpB) and a protein subunit.

The enzyme catalyses Endonucleolytic cleavage of RNA, removing 5'-extranucleotides from tRNA precursor.. RNaseP catalyzes the removal of the 5'-leader sequence from pre-tRNA to produce the mature 5'-terminus. It can also cleave other RNA substrates such as 4.5S RNA. The protein component plays an auxiliary but essential role in vivo by binding to the 5'-leader sequence and broadening the substrate specificity of the ribozyme. The protein is Ribonuclease P protein component of Bordetella petrii (strain ATCC BAA-461 / DSM 12804 / CCUG 43448).